The chain runs to 837 residues: Outer membrane usher protein HifC (837 aa).

Positions 1–26 (MKTKIFPLNKIAFACSLLLANPLAWA) are cleaved as a signal peptide. A disulfide bond links Cys813 and Cys833.

It belongs to the fimbrial export usher family.

Its subcellular location is the cell outer membrane. Its function is as follows. Essential for piliation. In Haemophilus influenzae, this protein is Outer membrane usher protein HifC (hifC).